Consider the following 327-residue polypeptide: 2-phosphoglycerate kinase (327 aa).

A compositionally biased stretch (basic and acidic residues) spans 1 to 20 (MSEKSSRKERDEKTEKETAR). The segment at 1 to 27 (MSEKSSRKERDEKTEKETARQGKHRRI) is disordered. Positions 25–111 (RRIRVKSRHY…LWRRIKKREE (87 aa)) constitute an ATP-cone domain.

This sequence belongs to the 2-phosphoglycerate kinase family. A divalent metal cation serves as cofactor.

The catalysed reaction is (2R)-2-phosphoglycerate + ATP = (2R)-2,3-bisphosphoglycerate + ADP + H(+). Its pathway is thermoadapter biosynthesis; cyclic 2,3-diphosphoglycerate biosynthesis; cyclic 2,3-diphosphoglycerate from 2-phospho-D-glycerate: step 1/2. In terms of biological role, catalyzes the phosphorylation of 2-phosphoglycerate to 2,3-diphosphoglycerate. Involved in the biosynthesis of cyclic 2,3-bisphosphoglycerate, a thermoprotectant. This chain is 2-phosphoglycerate kinase, found in Methanopyrus kandleri (strain AV19 / DSM 6324 / JCM 9639 / NBRC 100938).